A 765-amino-acid polypeptide reads, in one-letter code: Endosialin (765 aa).

The first 17 residues, 1 to 17 (MLLRLLLAWVAAVPALG), serve as a signal peptide directing secretion. The Extracellular portion of the chain corresponds to 18-695 (QVPWTPEPRA…GQSQRDDRWL (678 aa)). Residues 30-156 (GPSSCYALFP…CTLAVDGYLC (127 aa)) form the C-type lectin domain. Disulfide bonds link C131-C147, C164-C213, C203-C230, C316-C326, C322-C335, and C337-C350. Residues 162-232 (GACPALPLEV…WSQTGPLCPG (71 aa)) form the Sushi domain. The EGF-like; calcium-binding domain maps to 312 to 351 (DTDECQIAGVCQQMCVNYVGGFECYCSEGHELEADGISCS). O-linked (GalNAc...) threonine glycosylation is found at T401, T428, T448, T456, T459, and T466. O-linked (GalNAc...) serine glycans are attached at residues S467 and S470. O-linked (GalNAc...) threonine glycosylation occurs at T472. An O-linked (GalNAc...) serine glycan is attached at S477. O-linked (GalNAc...) threonine glycans are attached at residues T488, T517, T520, T535, T552, T554, T556, T570, T571, T604, and T613. The interval 548-675 (MSPDTHTITY…QLPSVPSTAA (128 aa)) is disordered. A compositionally biased stretch (pro residues) spans 622 to 633 (PAFPSSPLPPQR). O-linked (GalNAc...) serine glycosylation is found at S626 and S627. 2 O-linked (GalNAc...) threonine glycosylation sites follow: T635 and T638. The segment covering 635–647 (TNQTSSISPTHSY) has biased composition (polar residues). S639 and S640 each carry an O-linked (GalNAc...) serine glycan. T644 carries an O-linked (GalNAc...) threonine glycan. O-linked (GalNAc...) serine glycosylation is present at S663. O-linked (GalNAc...) threonine glycosylation is present at T673. A helical transmembrane segment spans residues 696–716 (LVALLVPTCVFLVVLLALGIV). The Cytoplasmic segment spans residues 717 to 765 (YCTRCGSHAPNKRITDCYRWVTHAGNKSSTEPMPPRGSLTGVQTCRTSV). A Phosphoserine modification is found at S754.

As to quaternary structure, interacts with PDGFRA; this interaction promotes PDGF receptor signaling pathway. Interacts with integrin beta-1/ITGB1. Interacts with insulin receptor/INSR; this interaction diminishes INSR autophosphorylation. Post-translationally, O-glycosylated by sialylated oligosaccharides. May be N-glycosylated. In terms of tissue distribution, expressed in cell lines derived from endothelial cells, embryonic fibroblasts and preadipocytes. Expressed in skeletal muscle by a subset of pericytes.

It is found in the membrane. Functionally, cell surface glycoprotein involved in various biological processes including angiogenesis, immune response modulation, and tissue remodeling and repair. Participates in pericyte proliferation through positive modulation of the PDGF receptor signaling pathway. Acts as a scaffold for factor X, triggering allosteric changes and the spatial re-alignment of factor X with the TF-factor VIIa complex, thereby enhancing coagulation activation. Modulates the insulin signaling pathway by interacting with insulin receptor/INSR and by diminishing its capacity to be autophosphorylated in response to insulin. Also regulates LPS-induced inflammatory responses in macrophages by favoring production of proinflammatory cytokines. This Mus musculus (Mouse) protein is Endosialin (Cd248).